Here is a 65-residue protein sequence, read N- to C-terminus: Ferredoxin-1 (65 aa).

The region spanning 2-30 is the 4Fe-4S ferredoxin-type domain; that stretch reads AMKIDPELCTSCGDCEPVCPTNAIAPKKG. [4Fe-4S] cluster-binding residues include cysteine 10, cysteine 13, cysteine 16, cysteine 20, cysteine 39, cysteine 42, cysteine 51, and cysteine 55.

The cofactor is [4Fe-4S] cluster.

Ferredoxins are iron-sulfur proteins that transfer electrons in a wide variety of metabolic reactions. This ferredoxin probably participates in nitrogen fixation. This is Ferredoxin-1 (fdxN) from Rhodobacter capsulatus (Rhodopseudomonas capsulata).